Here is a 58-residue protein sequence, read N- to C-terminus: Large ribosomal subunit protein uL30 (58 aa).

The protein belongs to the universal ribosomal protein uL30 family. As to quaternary structure, part of the 50S ribosomal subunit.

In Vibrio vulnificus (strain CMCP6), this protein is Large ribosomal subunit protein uL30.